The chain runs to 122 residues: Large ribosomal subunit protein uL14c (122 aa).

This sequence belongs to the universal ribosomal protein uL14 family. Part of the 50S ribosomal subunit.

It localises to the plastid. The protein localises to the chloroplast. Functionally, binds to 23S rRNA. The chain is Large ribosomal subunit protein uL14c from Eucalyptus globulus subsp. globulus (Tasmanian blue gum).